Here is a 351-residue protein sequence, read N- to C-terminus: Xaa-Pro dipeptidase (351 aa).

Residues D212, D223, H287, E316, and E330 each contribute to the Co(2+) site.

Belongs to the peptidase M24B family. Archaeal-type prolidase subfamily. In terms of assembly, homodimer. Requires Co(2+) as cofactor.

Its subcellular location is the cytoplasm. The catalysed reaction is Xaa-L-Pro dipeptide + H2O = an L-alpha-amino acid + L-proline. Functionally, splits dipeptides with a prolyl in the C-terminal position and a nonpolar amino acid at the N-terminal position. The polypeptide is Xaa-Pro dipeptidase (pepQ) (Pyrococcus horikoshii (strain ATCC 700860 / DSM 12428 / JCM 9974 / NBRC 100139 / OT-3)).